Reading from the N-terminus, the 340-residue chain is TD and POZ domain-containing protein 5 (340 aa).

In terms of domain architecture, MATH spans 19 to 149 (EFCYVWTIRN…ENKLTLCCKV (131 aa)). Residues 188–255 (TDCCLLVAGH…IYTGKAPHLQ (68 aa)) form the BTB domain.

It belongs to the Tdpoz family.

The chain is TD and POZ domain-containing protein 5 from Mus musculus (Mouse).